The following is a 359-amino-acid chain: Carbamoyl phosphate synthase arginine-specific small chain (359 aa).

Residues 1–168 (MKAYLVLATG…VETFEGNGPH (168 aa)) are CPSase. L-glutamine is bound by residues Ser-45, Gly-216, and Gly-218. The Glutamine amidotransferase type-1 domain maps to 168–355 (HIVLIDYGFK…IDDVAAKGRE (188 aa)). The Nucleophile role is filled by Cys-243. 4 residues coordinate L-glutamine: Leu-244, Gln-247, Asn-285, and Tyr-288. Catalysis depends on residues His-328 and Glu-330.

Belongs to the CarA family. As to quaternary structure, composed of two chains; the small (or glutamine) chain promotes the hydrolysis of glutamine to ammonia, which is used by the large (or ammonia) chain to synthesize carbamoyl phosphate. Tetramer of heterodimers (alpha,beta)4.

The catalysed reaction is hydrogencarbonate + L-glutamine + 2 ATP + H2O = carbamoyl phosphate + L-glutamate + 2 ADP + phosphate + 2 H(+). It carries out the reaction L-glutamine + H2O = L-glutamate + NH4(+). It functions in the pathway amino-acid biosynthesis; L-arginine biosynthesis; carbamoyl phosphate from bicarbonate: step 1/1. Functionally, small subunit of the glutamine-dependent carbamoyl phosphate synthetase (CPSase). CPSase catalyzes the formation of carbamoyl phosphate from the ammonia moiety of glutamine, carbonate, and phosphate donated by ATP, constituting the first step of the biosynthetic pathway leading to arginine and/or urea. The small subunit (glutamine amidotransferase) binds and cleaves glutamine to supply the large subunit with the substrate ammonia. The chain is Carbamoyl phosphate synthase arginine-specific small chain from Halalkalibacterium halodurans (strain ATCC BAA-125 / DSM 18197 / FERM 7344 / JCM 9153 / C-125) (Bacillus halodurans).